Reading from the N-terminus, the 327-residue chain is MQFIDQANIILKAGKGGNGIVSFRREKFVPAGGPSGGNGGKGGSIIIIADNNLQTLLDFKFNREIFAKDGFKGGPNKRSGASGENTILKVPCGTEIRDFNTGIILGDLTEDKQSLTIAHGGRGGHGNAYYLSNQNRAPESFTEGKEGEIWEVQLELKLLAEVGIIGLPNAGKSTLISVLSSARPKIANYPFTTLIPNLGVVRKADGNGCLFADIPGLISGAAEGVGLGHDFLRHIQRTKILIHLIDSIAENPIRDFEIIEKELKRYGSGLLNKERIVVLNKMELVDENYLQTITKKLENLSKKKVLVISSSLRKGLSPLLSEVWKRI.

The Obg domain occupies 1-159 (MQFIDQANII…WEVQLELKLL (159 aa)). An OBG-type G domain is found at 160-327 (AEVGIIGLPN…PLLSEVWKRI (168 aa)). Residues 166 to 173 (GLPNAGKS), 191 to 195 (FTTLI), 213 to 216 (DIPG), 280 to 283 (NKME), and 309 to 311 (SSS) contribute to the ATP site. Residues Ser173 and Thr193 each contribute to the Mg(2+) site.

The protein belongs to the TRAFAC class OBG-HflX-like GTPase superfamily. OBG GTPase family. As to quaternary structure, monomer. Mg(2+) serves as cofactor.

The protein resides in the cytoplasm. Its function is as follows. An essential GTPase which binds GTP, GDP and possibly (p)ppGpp with moderate affinity, with high nucleotide exchange rates and a fairly low GTP hydrolysis rate. Plays a role in control of the cell cycle, stress response, ribosome biogenesis and in those bacteria that undergo differentiation, in morphogenesis control. The protein is GTPase Obg of Prochlorococcus marinus subsp. pastoris (strain CCMP1986 / NIES-2087 / MED4).